The sequence spans 569 residues: MASSCAVQVKLELGHRAQVRKKPTVEGFTHDWMVFVRGPEHSNIQHFVEKVVFHLHESFPRPKRVCKDPPYKVEESGYAGFILPIEVYFKNKEEPKKVRFDYDLFLHLEGHPPVNHLRCEKLTFNNPTEDFRRKLLKAGGDPNRSIHTSSSSSSSSSSSSSSSSSSSSSSSSSSSSSSSSSSSSSSSSSSTSFSKPHKLMKEHKEKPSKDSREHKSAFKEPSRDHNKSSKDSSKKPKENKPLKEEKIVPKMAFKEPKPMSKEPKADSNLLTVTSGQQDKKAPSKRPPASDSEELSAKKRKKSSSEALFKSFSSAPPLILTCSADKKQIKDKSHVKMGKVKIESETSEKKKSMLPPFDDIVDPNDSDVEENMSSKSDSEQPSPASSSSSSSSSFTPSQTRQQGPLRSIMKDLHSDDNEEESDEAEDNDNDSEMERPVNRGGSRSRRVSLSDGSDSESSSASSPLHHEPPPPLLKTNNNQILEVKSPIKQSKSDKQIKNGECDKAYLDELVELHRRLMTLRERHILQQIVNLIEETGHFHITNTTFDFDLCSLDKTTVRKLQSYLETSGTS.

The region spanning 1-138 (MASSCAVQVK…EDFRRKLLKA (138 aa)) is the YEATS domain. Positions 138 to 476 (AGGDPNRSIH…PPPPLLKTNN (339 aa)) are disordered. Residues 149–190 (SSSSSSSSSSSSSSSSSSSSSSSSSSSSSSSSSSSSSSSSSS) are compositionally biased toward low complexity. The span at 202–265 (EHKEKPSKDS…PKPMSKEPKA (64 aa)) shows a compositional bias: basic and acidic residues. A phosphoserine mark is found at Ser289 and Ser295. Residues 296 to 301 (AKKRKK) carry the Nuclear localization signal motif. Residues 304 to 314 (SEALFKSFSSA) are compositionally biased toward low complexity. Residues 323–350 (ADKKQIKDKSHVKMGKVKIESETSEKKK) are compositionally biased toward basic and acidic residues. Residue Lys340 forms a Glycyl lysine isopeptide (Lys-Gly) (interchain with G-Cter in SUMO2) linkage. The segment covering 358 to 369 (DIVDPNDSDVEE) has biased composition (acidic residues). Low complexity predominate over residues 372–396 (SSKSDSEQPSPASSSSSSSSSFTPS). Phosphoserine is present on residues Ser413 and Ser420. Residues 415–430 (DNEEESDEAEDNDNDS) are compositionally biased toward acidic residues. Residues 446–462 (VSLSDGSDSESSSASSP) are compositionally biased toward low complexity. Ser484 is modified (phosphoserine).

Component of the super elongation complex (SEC), at least composed of EAF1, EAF2, CDK9, MLLT3/AF9, AFF (AFF1 or AFF4), the P-TEFb complex and ELL (ELL, ELL2 or ELL3). Interacts with BCOR. Interacts with CBX8. Interacts with ALKBH4. In terms of tissue distribution, ubiquitously expressed. Strong expression in the spleen.

It is found in the nucleus. The protein localises to the chromosome. Functionally, chromatin reader component of the super elongation complex (SEC), a complex required to increase the catalytic rate of RNA polymerase II transcription by suppressing transient pausing by the polymerase at multiple sites along the DNA. Specifically recognizes and binds acylated histone H3, with a preference for histone H3 that is crotonylated. Crotonylation marks active promoters and enhancers and confers resistance to transcriptional repressors. Recognizes and binds histone H3 crotonylated at 'Lys-9' (H3K9cr), and with slightly lower affinity histone H3 crotonylated at 'Lys-18' (H3K18cr). Also recognizes and binds histone H3 acetylated and butyrylated at 'Lys-9' (H3K9ac and H3K9bu, respectively), but with lower affinity than crotonylated histone H3. In the SEC complex, MLLT3 is required to recruit the complex to crotonylated histones. Recruitment of the SEC complex to crotonylated histones promotes recruitment of DOT1L on active chromatin to deposit histone H3 'Lys-79' methylation (H3K79me). Plays a key role in hematopoietic stem cell (HSC) maintenance by preserving, rather than conferring, HSC stemness. Acts by binding to the transcription start site of active genes in HSCs and sustaining level of H3K79me2, probably by recruiting DOT1L. This chain is Protein AF-9 (Mllt3), found in Mus musculus (Mouse).